Reading from the N-terminus, the 260-residue chain is Carbonic anhydrase 3 (260 aa).

Ala2 carries the N-acetylalanine modification. Residues 3 to 259 (KEWGYADHNG…LKGRVVRASF (257 aa)) enclose the Alpha-carbonic anhydrase domain. A phosphoserine mark is found at Ser29, Ser43, Ser50, and Ser55. An involved in proton transfer region spans residues 64 to 67 (RTCR). The residue at position 73 (Thr73) is a Phosphothreonine. Zn(2+) contacts are provided by His94, His96, and His119. The residue at position 127 (Tyr127) is a Phosphotyrosine. Residues Thr129 and Thr176 each carry the phosphothreonine modification. S-glutathionyl cysteine is present on residues Cys182 and Cys187. Substrate is bound at residue 198–199 (TT). Thr216 is modified (phosphothreonine). Ser219 carries the phosphoserine modification.

It belongs to the alpha-carbonic anhydrase family. It depends on Zn(2+) as a cofactor. In terms of processing, S-thiolated both by thiol-disulfide exchange with glutathione disulfide and by oxyradical-initiated S-thiolation with reduced glutathione. S-glutathionylated in hepatocytes under oxidative stress.

It is found in the cytoplasm. The enzyme catalyses hydrogencarbonate + H(+) = CO2 + H2O. Its activity is regulated as follows. Inhibited by acetazolamide. Functionally, reversible hydration of carbon dioxide. The sequence is that of Carbonic anhydrase 3 (CA3) from Equus caballus (Horse).